We begin with the raw amino-acid sequence, 483 residues long: Probable serine incorporator (483 aa).

The next 11 membrane-spanning stretches (helical) occupy residues 43–63 (STRI…WIML), 109–129 (IMFS…GVSS), 146–166 (LILL…FFIG), 169–189 (WSWI…ILLV), 218–238 (ISAT…MFHF), 249–269 (FFIG…MLPS), 274–294 (LPSS…YLVW), 295–315 (SAVS…PLFL), 338–358 (AGTN…SVAY), 414–434 (YSWS…MMVL), and 457–477 (VVSS…PVCL).

Belongs to the TDE1 family.

Its subcellular location is the endoplasmic reticulum membrane. Functionally, enhances the incorporation of serine into phosphatidylserine and sphingolipids. This is Probable serine incorporator (serinc) from Monosiga brevicollis (Choanoflagellate).